The sequence spans 647 residues: DNA mismatch repair protein MutL (647 aa).

It belongs to the DNA mismatch repair MutL/HexB family.

Its function is as follows. This protein is involved in the repair of mismatches in DNA. It is required for dam-dependent methyl-directed DNA mismatch repair. May act as a 'molecular matchmaker', a protein that promotes the formation of a stable complex between two or more DNA-binding proteins in an ATP-dependent manner without itself being part of a final effector complex. The protein is DNA mismatch repair protein MutL of Bacillus cereus (strain ATCC 10987 / NRS 248).